The primary structure comprises 384 residues: Galactokinase (384 aa).

34-37 (EHTD) provides a ligand contact to substrate. 123-129 (SSGLSSS) is an ATP binding site. Mg(2+) contacts are provided by Ser-129 and Glu-161. The Proton acceptor role is filled by Asp-173. Substrate is bound at residue Tyr-222.

Belongs to the GHMP kinase family. GalK subfamily.

It localises to the cytoplasm. It catalyses the reaction alpha-D-galactose + ATP = alpha-D-galactose 1-phosphate + ADP + H(+). It functions in the pathway carbohydrate metabolism; galactose metabolism. Functionally, catalyzes the transfer of the gamma-phosphate of ATP to D-galactose to form alpha-D-galactose-1-phosphate (Gal-1-P). The protein is Galactokinase of Actinobacillus pleuropneumoniae (Haemophilus pleuropneumoniae).